Reading from the N-terminus, the 407-residue chain is Phosphopentomutase (407 aa).

Positions 10, 306, 311, 347, 348, and 359 each coordinate Mn(2+).

The protein belongs to the phosphopentomutase family. It depends on Mn(2+) as a cofactor.

Its subcellular location is the cytoplasm. The catalysed reaction is 2-deoxy-alpha-D-ribose 1-phosphate = 2-deoxy-D-ribose 5-phosphate. It catalyses the reaction alpha-D-ribose 1-phosphate = D-ribose 5-phosphate. It participates in carbohydrate degradation; 2-deoxy-D-ribose 1-phosphate degradation; D-glyceraldehyde 3-phosphate and acetaldehyde from 2-deoxy-alpha-D-ribose 1-phosphate: step 1/2. Functionally, isomerase that catalyzes the conversion of deoxy-ribose 1-phosphate (dRib-1-P) and ribose 1-phosphate (Rib-1-P) to deoxy-ribose 5-phosphate (dRib-5-P) and ribose 5-phosphate (Rib-5-P), respectively. The chain is Phosphopentomutase from Buchnera aphidicola subsp. Acyrthosiphon pisum (strain 5A).